Here is a 616-residue protein sequence, read N- to C-terminus: Homeodomain-interacting protein kinase 4 (616 aa).

The Protein kinase domain occupies 11–347 (YDIIEVLGKG…PSAALRHPFV (337 aa)). ATP contacts are provided by residues 17-25 (LGKGTFGEV) and Lys-40. The Proton acceptor role is filled by Asp-136. The segment at 487–616 (HKARKAPAGS…SFLQHVGGHH (130 aa)) is disordered. Positions 497-512 (KSDSNFSNLIRLSQAS) are enriched in polar residues. At Ser-512 the chain carries Phosphoserine. A compositionally biased stretch (basic and acidic residues) spans 542-560 (REGDGPSIKDRPMDAERSG).

This sequence belongs to the protein kinase superfamily. CMGC Ser/Thr protein kinase family. HIPK subfamily. Post-translationally, autophosphorylated.

It localises to the cytoplasm. It catalyses the reaction L-seryl-[protein] + ATP = O-phospho-L-seryl-[protein] + ADP + H(+). The enzyme catalyses L-threonyl-[protein] + ATP = O-phospho-L-threonyl-[protein] + ADP + H(+). Its function is as follows. Protein kinase that phosphorylates TP53, and thus induces TP53 repression of BIRC5 promoter. May act as a corepressor of transcription factors (Potential). The chain is Homeodomain-interacting protein kinase 4 (Hipk4) from Rattus norvegicus (Rat).